Reading from the N-terminus, the 90-residue chain is Major mite allergen Der p 23 (90 aa).

The first 21 residues, 1–21 (MKFNIIIVFISLAILVHSSYA), serve as a signal peptide directing secretion. A disordered region spans residues 22–42 (ANDNDDDPTTTVHPTTTEQPD). Positions 30-39 (TTTVHPTTTE) are enriched in low complexity. The region spanning 44-90 (KFECPSRFGYFADPKDPHKFYICSNWEAVHKDCPGNTRWNEDEETCT) is the Chitin-binding type-2 domain. 2 disulfides stabilise this stretch: Cys-47-Cys-66 and Cys-76-Cys-89. An important for IgE-binding region spans residues 52–90 (GYFADPKDPHKFYICSNWEAVHKDCPGNTRWNEDEETCT).

Monomer. In terms of tissue distribution, expressed in epithelial cells of the midgut.

It is found in the secreted. The protein localises to the endoplasmic reticulum. The protein resides in the cytoplasmic vesicle. Functionally, does not bind chitin in vitro. In Dermatophagoides pteronyssinus (European house dust mite), this protein is Major mite allergen Der p 23.